A 1698-amino-acid chain; its full sequence is Protein 4.1 homolog (1698 aa).

The tract at residues 1-31 (MPAEIKPSAPAEPETPTKSKPKSSSSSHGKP) is disordered. Residues 12–27 (EPETPTKSKPKSSSSS) show a composition bias toward low complexity. Residues 32–314 (ALARVTLLDG…EHHTFFRLMT (283 aa)) form the FERM domain. A hydrophilic region spans residues 317–434 (PVSKSKMFPV…KEEKERKERE (118 aa)). 2 disordered regions span residues 335–361 (GRTQAESTNTPVDRTPPKFNRTLSGAR) and 374–710 (EKEK…SDPT). Residues 374-448 (EKEKVARKSS…EEKKKAEKAA (75 aa)) are compositionally biased toward basic and acidic residues. Positions 449–461 (KAALAAGAAAGAA) are enriched in low complexity. Ser471, Ser474, and Ser478 each carry phosphoserine. Positions 499 to 514 (KDGKDKSGKDKDKEVG) are enriched in basic and acidic residues. Residues 562–571 (DGNTSPTRKS) show a composition bias toward polar residues. Ser566 carries the phosphoserine modification. The segment covering 579-589 (YDQDPNSRKSG) has biased composition (basic and acidic residues). Over residues 594-603 (EQLSPTSQQK) the composition is skewed to polar residues. Over residues 618–627 (ALKETAEKLK) the composition is skewed to basic and acidic residues. Phosphoserine is present on residues Ser659 and Ser687. Positions 684 to 696 (RSYSPTKGPQGYS) are enriched in polar residues. The residue at position 689 (Thr689) is a Phosphothreonine. Ser697, Ser1398, Ser1401, and Ser1402 each carry phosphoserine. Residues 1286–1698 (GEIVQVDPND…EKIEIQQQTQ (413 aa)) form a C-terminal (CTD) region. At Thr1407 the chain carries Phosphothreonine. Residues 1509-1532 (LGKNAKTEQLEEKTVATTRTHDPN) are compositionally biased toward basic and acidic residues. The disordered stretch occupies residues 1509–1599 (LGKNAKTEQL…SPLFTTSATT (91 aa)). The segment covering 1533–1554 (KQQQRVVTQEVKTTATVTSGDQ) has biased composition (polar residues). Low complexity predominate over residues 1561 to 1571 (VSSTSSGDSGT). Over residues 1584 to 1599 (RTDNQKSPLFTTSATT) the composition is skewed to polar residues. Position 1590 is a phosphoserine (Ser1590).

At onset of germ band retraction, expression is seen in epidermis, hindgut and foregut. During retraction, expression extends to tracheal branches and salivary glands.

The protein localises to the cell junction. It localises to the septate junction. Functionally, an integral component of the septate junction. May play a role in cell-cell interactions that are necessary for proper development. Vital for embryonic development. The polypeptide is Protein 4.1 homolog (cora) (Drosophila melanogaster (Fruit fly)).